We begin with the raw amino-acid sequence, 365 residues long: Peptide chain release factor 2 (365 aa).

Gln-251 is subject to N5-methylglutamine.

It belongs to the prokaryotic/mitochondrial release factor family. Post-translationally, methylated by PrmC. Methylation increases the termination efficiency of RF2.

It is found in the cytoplasm. Functionally, peptide chain release factor 2 directs the termination of translation in response to the peptide chain termination codons UGA and UAA. The protein is Peptide chain release factor 2 of Sulfurimonas denitrificans (strain ATCC 33889 / DSM 1251) (Thiomicrospira denitrificans (strain ATCC 33889 / DSM 1251)).